The primary structure comprises 216 residues: Glycerol-3-phosphate acyltransferase (216 aa).

5 helical membrane-spanning segments follow: residues 4-24 (TIIG…LWIG), 71-91 (LPFF…LAVI), 113-133 (VVLG…ASIL), 144-164 (VLSA…GFIL), and 165-185 (PSYD…IILR).

Belongs to the PlsY family. Probably interacts with PlsX.

It is found in the cell membrane. The catalysed reaction is an acyl phosphate + sn-glycerol 3-phosphate = a 1-acyl-sn-glycero-3-phosphate + phosphate. It functions in the pathway lipid metabolism; phospholipid metabolism. In terms of biological role, catalyzes the transfer of an acyl group from acyl-phosphate (acyl-PO(4)) to glycerol-3-phosphate (G3P) to form lysophosphatidic acid (LPA). This enzyme utilizes acyl-phosphate as fatty acyl donor, but not acyl-CoA or acyl-ACP. This Streptococcus sanguinis (strain SK36) protein is Glycerol-3-phosphate acyltransferase.